The following is a 430-amino-acid chain: Type II methyltransferase M.Sau96I (430 aa).

The region spanning 9-63 is the HTH cro/C1-type domain; sequence IEKMKNQNIKTQTELAEKIDISKSQLSFMFSDEYEPLKKNVIKLADVLKVSPNDI. The region spanning 99-429 is the SAM-dependent MTase C5-type domain; the sequence is YNVFETFAGA…KSLVHYLNQF (331 aa). Cys-174 is a catalytic residue.

Belongs to the class I-like SAM-binding methyltransferase superfamily. C5-methyltransferase family.

It carries out the reaction a 2'-deoxycytidine in DNA + S-adenosyl-L-methionine = a 5-methyl-2'-deoxycytidine in DNA + S-adenosyl-L-homocysteine + H(+). Functionally, a methylase that recognizes the double-stranded sequence 5'-GGNCC-3', methylates C-4 on both strands, and protects the DNA from cleavage by the Sau96I endonuclease. The sequence is that of Type II methyltransferase M.Sau96I from Staphylococcus aureus.